The sequence spans 406 residues: MKRAVITGLGIVSSIGNNQQEVLASLREGRSGITFSQELKDSGMRSHVWGNVKLDTTGLIDRKVVRFMSDASIYAFLSMEQAIADAGLSPEAYQNNPRVGLIAGSGGGSPRFQVFGADAMRGPRGLKAVGPYVVTKAMASGVSACLATPFKIHGVNYSISSACATSAHCIGNAVEQIQLGKQDIVFAGGGEELCWEMACEFDAMGALSTKYNDTPEKASRTYDAHRDGFVIAGGGGMVVVEELEHALARGAHIYAEIVGYGATSDGADMVAPSGEGAVRCMKMAMHGVDTPIDYLNSHGTSTPVGDVKELAAIREVFGDKSPAISATKAMTGHSLGAAGVQEAIYSLLMLEHGFIAPSINIEELDEQAAGLNIVTETTDRELTTVMSNSFGFGGTNATLVMRKLKD.

The Ketosynthase family 3 (KS3) domain occupies 1–403 (MKRAVITGLG…GTNATLVMRK (403 aa)). Catalysis depends on for beta-ketoacyl synthase activity residues C163, H298, and H333.

Belongs to the thiolase-like superfamily. Beta-ketoacyl-ACP synthases family. Homodimer.

The protein localises to the cytoplasm. The catalysed reaction is a fatty acyl-[ACP] + malonyl-[ACP] + H(+) = a 3-oxoacyl-[ACP] + holo-[ACP] + CO2. It carries out the reaction (3Z)-decenoyl-[ACP] + malonyl-[ACP] + H(+) = 3-oxo-(5Z)-dodecenoyl-[ACP] + holo-[ACP] + CO2. It functions in the pathway lipid metabolism; fatty acid biosynthesis. In terms of biological role, involved in the type II fatty acid elongation cycle. Catalyzes the elongation of a wide range of acyl-ACP by the addition of two carbons from malonyl-ACP to an acyl acceptor. Can also use unsaturated fatty acids. Catalyzes a key reaction in unsaturated fatty acid (UFA) synthesis, the elongation of the cis-3-decenoyl-ACP produced by FabA. This chain is 3-oxoacyl-[acyl-carrier-protein] synthase 1 (fabB), found in Escherichia coli O6:H1 (strain CFT073 / ATCC 700928 / UPEC).